The chain runs to 247 residues: E3 SUMO-protein ligase NSE2 (247 aa).

Met1 is subject to N-acetylmethionine. Residues Lys90 and Lys107 each participate in a glycyl lysine isopeptide (Lys-Gly) (interchain with G-Cter in SUMO2) cross-link. Ser116 is subject to Phosphoserine. Glycyl lysine isopeptide (Lys-Gly) (interchain with G-Cter in SUMO2) cross-links involve residues Lys125 and Lys130. Residues 154 to 240 (VDEDIIVTQS…LRRAIENHNK (87 aa)) form an SP-RING-type zinc finger. Residues Cys185, His187, Cys210, and Cys215 each coordinate Zn(2+).

The protein belongs to the NSE2 family. In terms of assembly, component of the SMC5-SMC6 complex which consists at least of SMC5, SMC6, NSMCE2, NSMCE1, NSMCE4A or EID3 and NSMCE3. Sumoylated, possibly via autosumoylation.

The protein resides in the nucleus. The protein localises to the chromosome. It is found in the telomere. Its subcellular location is the PML body. It participates in protein modification; protein sumoylation. Functionally, E3 SUMO-protein ligase component of the SMC5-SMC6 complex, a complex involved in DNA double-strand break repair by homologous recombination. Is not be required for the stability of the complex. The complex may promote sister chromatid homologous recombination by recruiting the SMC1-SMC3 cohesin complex to double-strand breaks. The complex is required for telomere maintenance via recombination in ALT (alternative lengthening of telomeres) cell lines and mediates sumoylation of shelterin complex (telosome) components which is proposed to lead to shelterin complex disassembly in ALT-associated PML bodies (APBs). Acts as an E3 ligase mediating SUMO attachment to various proteins such as SMC6L1 and TSNAX, the shelterin complex subunits TERF1, TERF2, TINF2 and TERF2IP, RAD51AP1, and maybe the cohesin components RAD21 and STAG2. Required for recruitment of telomeres to PML nuclear bodies. SUMO protein-ligase activity is required for the prevention of DNA damage-induced apoptosis by facilitating DNA repair, and for formation of APBs in ALT cell lines. Required for sister chromatid cohesion during prometaphase and mitotic progression. This Homo sapiens (Human) protein is E3 SUMO-protein ligase NSE2 (NSMCE2).